A 327-amino-acid chain; its full sequence is Fumigatonoid B endoperoxide isomerase nvfE (327 aa).

The interval 1-22 (MGRDQVSHKRSQNSNVSEIPDL) is disordered. 3 residues coordinate Fe cation: His152, Asp154, and His234.

This sequence belongs to the PhyH family. As to quaternary structure, homodimer. Requires Fe cation as cofactor.

The enzyme catalyses fumigatonoid B = fumigatonoid C. It participates in secondary metabolite biosynthesis; terpenoid biosynthesis. Fumigatonoid B endoperoxide isomerase; part of the gene cluster that mediates the biosynthesis of novofumigatonin, a heavily oxygenated meroterpenoid containing a unique orthoester moiety. The first step of the pathway is the synthesis of 3,5-dimethylorsellinic acid (DMOA) by the polyketide synthase nvfA via condensation of one acetyl-CoA starter unit with 3 malonyl-CoA units and 2 methylations. DMOA is then converted to farnesyl-DMOA by the farnesyltransferase nvfB. Epoxydation by FAD-dependent monooxygenase nvfK, followed by a protonation-initiated cyclization catalyzed by the terpene cyclase nvfL leads to the production of asnavolin H. The short chain dehydrogenase nvfC then as a 3-OH dehydrogenase of asnovolin H to yield chemesin D. There are two branches to synthesize asnovolin A from chemesin D. In one branch, chemesin D undergoes Baeyer-Villiger oxidation by nvfH, methylation by nvfJ, and enoyl reduction by the nvfM D enoylreductase that reduces the double bond between C-5'and C-6', to form respectively asnovolin I, asnovolin K, and asnovolin A. In the other branch, the methylation precedes the Baeyer-Villiger oxidation and the enoyl reduction to yield asnovolin A via the asnovolin J intermediate. Asnovolin A is further converted to fumigatonoid A by the Fe(II)/2-oxoglutarate-dependent dioxygenase nvfI that catalyzes an endoperoxidation reaction. The alpha/beta hydrolase nvfD then acts as an epimerase that converts fumigatonoid A to its C-5' epimer, which then undergoes spontaneous or nvfD-catalyzed lactonization. The following step utilizes the ketoreductase nvfG to produce fumigatonoid B. The dioxygenase nvfE further converts fumigatonoid B into fumigatonoid C. Finally the Fe(II)/2-oxoglutarate-dependent dioxygenase nvfF catalyzes two rounds of oxidation to transform fumigatonoid C into the end product, novofumigatonin A. The polypeptide is Fumigatonoid B endoperoxide isomerase nvfE (Aspergillus novofumigatus (strain IBT 16806)).